The sequence spans 65 residues: MAKKVKGARVTIHLECIDCNNQQDSGRKLASFSRYTTQKNRYNTPTRLELKKFCPSCSKHTIHIE.

It belongs to the bacterial ribosomal protein bL33 family.

The protein resides in the plastid. Its subcellular location is the chloroplast. The polypeptide is Large ribosomal subunit protein bL33c (Psilotum nudum (Whisk fern)).